The chain runs to 228 residues: 7-cyano-7-deazaguanine synthase (228 aa).

7 to 17 (LSGGLDSAVNL) contacts ATP. Zn(2+) contacts are provided by C192, C200, C203, and C206.

This sequence belongs to the QueC family. As to quaternary structure, homodimer. Requires Zn(2+) as cofactor.

The catalysed reaction is 7-carboxy-7-deazaguanine + NH4(+) + ATP = 7-cyano-7-deazaguanine + ADP + phosphate + H2O + H(+). It participates in purine metabolism; 7-cyano-7-deazaguanine biosynthesis. Catalyzes the ATP-dependent conversion of 7-carboxy-7-deazaguanine (CDG) to 7-cyano-7-deazaguanine (preQ(0)). The polypeptide is 7-cyano-7-deazaguanine synthase (Desulforamulus reducens (strain ATCC BAA-1160 / DSM 100696 / MI-1) (Desulfotomaculum reducens)).